The primary structure comprises 1295 residues: MMEILRGSPALSAFRINKLLARFQAANLQVHNIYAEYVHFADLNAPLNDSEQAQLTRLLQYGPALSSHTPAGKLLLVTPRPGTISPWSSKATDIAHNCGLQQVDRLERGVAYYIEASTLTAEQWRQVAAELHDRMMETVFPSLTDAEKLFIHHQPAPVSSVDLLGEGRQALIDANLRLGLALAEDEIDYLQEAFTKLGRNPNDIELYMFAQANSEHCRHKIFNADWIIDGKPQPKSLFKMIKNTFETTPDYVLSAYKDNAAVMEGSAVGRYFADHNTGRYDFHQEPAHILMKVETHNHPTAISPWPGAATGSGGEIRDEGATGRGAKPKAGLVGFSVSNLRIPGFEQPWEEDFGKPERIVTALDIMTEGPLGGAAFNNEFGRPALTGYFRTYEEKVNSHNGEELRGYHKPIMLAGGIGNIRADHVQKGEIVVGAKLIVLGGPAMNIGLGGGAASSMASGQSDADLDFASVQRDNPEMERRCQEVIDRCWQLGDANPILFIHDVGAGGLSNAMPELVSDGGRGGKFELRDILSDEPGMSPLEIWCNESQERYVLAVAADQLPLFDELCKRERAPYAVIGDATEEQHLSLHDNHFDNQPIDLPLDVLLGKTPKMTRDVQTLKAKGDALNRADITIADAVNRVLHLPTVAEKTFLVTIGDRTVTGMVARDQMVGPWQVPVADCAVTTASLDSYYGEAMSIGERAPVALLDFAASARLAVGEALTNIAATQIGDIKRIKLSANWMAAAGHPGEDAGLYDAVKAVGEELCPQLGLTIPVGKDSMSMKTRWQEGNEQREMTSPLSLVISAFARVEDVRHTLTPQLSTEDNALLLIDLGKGHNALGATALAQVYRQLGDKPADVRDVAQLKGFYDAMQALVAARKLLAWHDRSDGGLLVTLAEMAFAGHCGVQVDIAALGDDHLAALFNEELGGVIQVRAEDRDAVEALLAQYGLADCVHYLGQALAGDRFVITANDQTVFSESRTTLRVWWAETTWQMQRLRDNPQCADQEHEAKANDADPGLNVKLSFDINEDIAAPYIATGARPKVAVLREQGGNSHVEMAAAFHRAGFDAIDVHMSDLLGGRIGLGNFHALVACGGFSYGDVLGAGEGWAKSILFNPRVRDEFETFFHRPQTLALGVCNGCQMMSNLRELIPGSELWPRFVRNHSDRFEARFSLVEVTQSPSLLLQGMVGSQMPIAVSHGEGRVEVRDDAHLAALESKGLVALRYVDNFGKVTETYPANPNGSPNGITAVTTENGRVTIMMPHPERVFRTVANSWHPENWGEDSPWMRIFRNARKQLG.

Positions 305 to 327 are disordered; sequence WPGAATGSGGEIRDEGATGRGAK. Residues 307–318, 386–388, and A678 contribute to the ATP site; these read GAATGSGGEIRD and TGY. Mg(2+)-binding residues include D679, E718, N722, and D884. Residue S886 coordinates ATP. Residues 1041–1295 enclose the Glutamine amidotransferase type-1 domain; sequence KVAVLREQGG…IFRNARKQLG (255 aa). C1135 serves as the catalytic Nucleophile. Active-site residues include H1260 and E1262.

This sequence in the N-terminal section; belongs to the FGAMS family. In terms of assembly, monomer.

Its subcellular location is the cytoplasm. It carries out the reaction N(2)-formyl-N(1)-(5-phospho-beta-D-ribosyl)glycinamide + L-glutamine + ATP + H2O = 2-formamido-N(1)-(5-O-phospho-beta-D-ribosyl)acetamidine + L-glutamate + ADP + phosphate + H(+). The protein operates within purine metabolism; IMP biosynthesis via de novo pathway; 5-amino-1-(5-phospho-D-ribosyl)imidazole from N(2)-formyl-N(1)-(5-phospho-D-ribosyl)glycinamide: step 1/2. Phosphoribosylformylglycinamidine synthase involved in the purines biosynthetic pathway. Catalyzes the ATP-dependent conversion of formylglycinamide ribonucleotide (FGAR) and glutamine to yield formylglycinamidine ribonucleotide (FGAM) and glutamate. This chain is Phosphoribosylformylglycinamidine synthase, found in Salmonella choleraesuis (strain SC-B67).